A 124-amino-acid chain; its full sequence is Small ribosomal subunit protein bS6 (124 aa).

The protein belongs to the bacterial ribosomal protein bS6 family.

Its function is as follows. Binds together with bS18 to 16S ribosomal RNA. This Actinobacillus pleuropneumoniae serotype 5b (strain L20) protein is Small ribosomal subunit protein bS6.